Reading from the N-terminus, the 88-residue chain is Putative membrane protein insertion efficiency factor (88 aa).

The protein belongs to the UPF0161 family.

The protein resides in the cell inner membrane. Could be involved in insertion of integral membrane proteins into the membrane. This chain is Putative membrane protein insertion efficiency factor, found in Prochlorococcus marinus (strain MIT 9313).